Reading from the N-terminus, the 196-residue chain is MADS-box transcription factor 32 (196 aa).

The MADS-box domain maps to 1 to 61; that stretch reads MGRGRSEIKR…GKLYHFLSPT (61 aa). A K-box domain is found at 85–175; the sequence is RQERRAELEK…CDKIAHAQTL (91 aa).

It is found in the nucleus. Probable transcription factor. This is MADS-box transcription factor 32 (MADS32) from Oryza sativa subsp. japonica (Rice).